The chain runs to 700 residues: Mitogen-activated protein kinase 9 (700 aa).

The region spanning 107–398 (YRIQEVIGKG…AEEALTDPYF (292 aa)) is the Protein kinase domain. Residues 113-121 (IGKGSYGVV) and Lys136 each bind ATP. Residue Asp233 is the Proton acceptor of the active site. A Phosphothreonine modification is found at Thr269. The TXY motif lies at 269 to 271 (TDY). A Phosphotyrosine modification is found at Tyr271. Positions 475–523 (EESNGSGSAIPMERKHASLPRSTTVHSTPIPPKEQPLAASLKSSRPVSD) are disordered.

Belongs to the protein kinase superfamily. CMGC Ser/Thr protein kinase family. MAP kinase subfamily. In terms of processing, dually phosphorylated on Thr-269 and Tyr-271, which activates the enzyme.

The enzyme catalyses L-seryl-[protein] + ATP = O-phospho-L-seryl-[protein] + ADP + H(+). It carries out the reaction L-threonyl-[protein] + ATP = O-phospho-L-threonyl-[protein] + ADP + H(+). Activated by threonine and tyrosine phosphorylation. The sequence is that of Mitogen-activated protein kinase 9 (MPK9) from Oryza sativa subsp. japonica (Rice).